Reading from the N-terminus, the 194-residue chain is Holliday junction branch migration complex subunit RuvA (194 aa).

A domain I region spans residues 1–64 (MIGRLRGVLT…DDSAALYGFL (64 aa)). A domain II region spans residues 65 to 140 (SESERRLFRH…RAADFNNGIS (76 aa)). Positions 140–144 (STSGK) are flexible linker. The interval 145-194 (LNLDTVSEAALALQQLGYKPAEAARMARDAGTESDDVASVIKKALQAALR) is domain III.

It belongs to the RuvA family. As to quaternary structure, homotetramer. Forms an RuvA(8)-RuvB(12)-Holliday junction (HJ) complex. HJ DNA is sandwiched between 2 RuvA tetramers; dsDNA enters through RuvA and exits via RuvB. An RuvB hexamer assembles on each DNA strand where it exits the tetramer. Each RuvB hexamer is contacted by two RuvA subunits (via domain III) on 2 adjacent RuvB subunits; this complex drives branch migration. In the full resolvosome a probable DNA-RuvA(4)-RuvB(12)-RuvC(2) complex forms which resolves the HJ.

It is found in the cytoplasm. In terms of biological role, the RuvA-RuvB-RuvC complex processes Holliday junction (HJ) DNA during genetic recombination and DNA repair, while the RuvA-RuvB complex plays an important role in the rescue of blocked DNA replication forks via replication fork reversal (RFR). RuvA specifically binds to HJ cruciform DNA, conferring on it an open structure. The RuvB hexamer acts as an ATP-dependent pump, pulling dsDNA into and through the RuvAB complex. HJ branch migration allows RuvC to scan DNA until it finds its consensus sequence, where it cleaves and resolves the cruciform DNA. This Xylella fastidiosa (strain 9a5c) protein is Holliday junction branch migration complex subunit RuvA.